The chain runs to 198 residues: Recombination protein RecR (198 aa).

The segment at 57–72 adopts a C4-type zinc-finger fold; sequence CSVCGNITDEDPCEIC. Positions 80–175 constitute a Toprim domain; sequence EMILVVEQPK…KVTRLAHGLA (96 aa).

It belongs to the RecR family.

Its function is as follows. May play a role in DNA repair. It seems to be involved in an RecBC-independent recombinational process of DNA repair. It may act with RecF and RecO. The sequence is that of Recombination protein RecR from Latilactobacillus sakei subsp. sakei (strain 23K) (Lactobacillus sakei subsp. sakei).